A 283-amino-acid polypeptide reads, in one-letter code: Protein boule-like (283 aa).

The disordered stretch occupies residues 1–25 (MQTDSLSPSPNPVSPVPLNNPTSAP). An RRM domain is found at 33 to 110 (NRIFVGGIDF…KKLNIGPAIR (78 aa)). Positions 160 to 184 (PSRSVCSSPVMVAQPIYQQPAYHYQ) constitute a DAZ domain.

This sequence belongs to the RRM DAZ family. As to quaternary structure, interacts with DAZ1 and DAZL.

Its subcellular location is the cytoplasm. Its function is as follows. Probable RNA-binding protein, which may be required during spermatogenesis. May act by binding to the 3'-UTR of mRNAs and regulating their translation. The sequence is that of Protein boule-like (BOLL) from Macaca fascicularis (Crab-eating macaque).